Here is a 154-residue protein sequence, read N- to C-terminus: Endoribonuclease YbeY (154 aa).

H117, H121, and H127 together coordinate Zn(2+).

It belongs to the endoribonuclease YbeY family. Requires Zn(2+) as cofactor.

Its subcellular location is the cytoplasm. Its function is as follows. Single strand-specific metallo-endoribonuclease involved in late-stage 70S ribosome quality control and in maturation of the 3' terminus of the 16S rRNA. This Aromatoleum aromaticum (strain DSM 19018 / LMG 30748 / EbN1) (Azoarcus sp. (strain EbN1)) protein is Endoribonuclease YbeY.